The chain runs to 213 residues: Orotate phosphoribosyltransferase (213 aa).

Residue K26 coordinates 5-phospho-alpha-D-ribose 1-diphosphate. 34-35 (FF) is an orotate binding site. 5-phospho-alpha-D-ribose 1-diphosphate is bound by residues 72–73 (YK), R99, K100, K103, H105, and 124–132 (DDVITAGTA). The orotate site is built by T128 and R156.

This sequence belongs to the purine/pyrimidine phosphoribosyltransferase family. PyrE subfamily. As to quaternary structure, homodimer. Requires Mg(2+) as cofactor.

It catalyses the reaction orotidine 5'-phosphate + diphosphate = orotate + 5-phospho-alpha-D-ribose 1-diphosphate. The protein operates within pyrimidine metabolism; UMP biosynthesis via de novo pathway; UMP from orotate: step 1/2. Its function is as follows. Catalyzes the transfer of a ribosyl phosphate group from 5-phosphoribose 1-diphosphate to orotate, leading to the formation of orotidine monophosphate (OMP). The chain is Orotate phosphoribosyltransferase from Pseudomonas savastanoi pv. phaseolicola (strain 1448A / Race 6) (Pseudomonas syringae pv. phaseolicola (strain 1448A / Race 6)).